We begin with the raw amino-acid sequence, 362 residues long: Protein RAFTIN 1B (362 aa).

The signal sequence occupies residues 1-20 (MARFLVALLAATLVAVQAGG). Residues 58–94 (STSFVRDPEDRPPFDYRDYSRSSSDDEPSKSTVAASG) form a disordered region. Residues 63–86 (RDPEDRPPFDYRDYSRSSSDDEPS) show a composition bias toward basic and acidic residues. Asparagine 102 carries N-linked (GlcNAc...) asparagine glycosylation. The 215-residue stretch at 142-356 (FFHEEAVRVG…PYGHIIWAKN (215 aa)) folds into the BURP domain.

As to expression, specifically expressed in anthers, in the tapetum and microspores (at protein level).

Its function is as follows. Required for pollen development. Probably synthesized in the tapetum, packaged in Ubisch bodies and transported at appropriate stages to the micropsores. The chain is Protein RAFTIN 1B (RAFTIN1B) from Triticum aestivum (Wheat).